The following is a 452-amino-acid chain: MGKVSLKDELAGMLNPQPQERDPEALEDAFSDREDSSEEENDTLGREHYVDVSESKLRSKQAPQLDPKFKGRKTSRQELLNSGSLNSQSSSPSEEEDSEEDENDAVSEDHENFSSSEASSISEENEDDDQSSAIPEKDMDRLKKIINGEKKLSDQIRTSALEDMKKGLALKEQMRFYDNVLDTRIRLQKGCSQLLSSSNQLQGDKVEARDGLVSFIQHTLQLRKNLLIDSGVEILDSRSKRKENPVSLEEIALEMNNLDDSLNEWKNDTLTKWHNRVQAVQGISQSNKFKALNQSIVQQIENSMINKKDLVERTRIDYSDPNNKTFNPEIYNDTDFYQSLLKDFINSRMADSTRDGTVRWMATKKQKQKKENVDTKASKGRKIRYHVHDKLQNFMAPIEVTVWPDEQTEDLFSSLLGQQLDLSETANDTNTSNFVEKDDELISSNDGFSLFG.

Basic and acidic residues-rich tracts occupy residues 1-10 (MGKVSLKDEL) and 19-34 (QERD…SDRE). The tract at residues 1–141 (MGKVSLKDEL…SAIPEKDMDR (141 aa)) is disordered. Ser31, Ser36, and Ser37 each carry phosphoserine. The span at 43-57 (TLGREHYVDVSESKL) shows a compositional bias: basic and acidic residues. A compositionally biased stretch (low complexity) spans 78–92 (ELLNSGSLNSQSSSP). The span at 93 to 106 (SEEEDSEEDENDAV) shows a compositional bias: acidic residues.

The protein belongs to the AATF family.

It is found in the nucleus. It localises to the nucleolus. The polypeptide is Protein bfr2 (bfr2) (Schizosaccharomyces pombe (strain 972 / ATCC 24843) (Fission yeast)).